A 344-amino-acid polypeptide reads, in one-letter code: Arginine N-succinyltransferase (344 aa).

A succinyl-CoA-binding site is contributed by Leu-125. The active-site Proton donor is the His-229.

It belongs to the arginine N-succinyltransferase family.

The enzyme catalyses succinyl-CoA + L-arginine = N(2)-succinyl-L-arginine + CoA + H(+). Its pathway is amino-acid degradation; L-arginine degradation via AST pathway; L-glutamate and succinate from L-arginine: step 1/5. Catalyzes the transfer of succinyl-CoA to arginine to produce N(2)-succinylarginine. This is Arginine N-succinyltransferase from Escherichia coli O6:K15:H31 (strain 536 / UPEC).